A 179-amino-acid polypeptide reads, in one-letter code: Large ribosomal subunit protein uL6 (179 aa).

The protein belongs to the universal ribosomal protein uL6 family. Part of the 50S ribosomal subunit.

In terms of biological role, this protein binds to the 23S rRNA, and is important in its secondary structure. It is located near the subunit interface in the base of the L7/L12 stalk, and near the tRNA binding site of the peptidyltransferase center. This Syntrophotalea carbinolica (strain DSM 2380 / NBRC 103641 / GraBd1) (Pelobacter carbinolicus) protein is Large ribosomal subunit protein uL6.